Reading from the N-terminus, the 183-residue chain is Small ribosomal subunit protein bS20c (183 aa).

The N-terminal 68 residues, 1-68 (MAAISMACVS…FQRRGFSVVC (68 aa)), are a transit peptide targeting the chloroplast. Positions 79–99 (AAKRTRQAETRRLRNKARKSE) are disordered.

As to quaternary structure, component of the chloroplast small ribosomal subunit (SSU). Mature 70S chloroplast ribosomes of higher plants consist of a small (30S) and a large (50S) subunit. The 30S small subunit contains 1 molecule of ribosomal RNA (16S rRNA) and 24 different proteins. The 50S large subunit contains 3 rRNA molecules (23S, 5S and 4.5S rRNA) and 33 different proteins.

The protein resides in the plastid. The protein localises to the chloroplast. Functionally, component of the chloroplast ribosome (chloro-ribosome), a dedicated translation machinery responsible for the synthesis of chloroplast genome-encoded proteins, including proteins of the transcription and translation machinery and components of the photosynthetic apparatus. This Spinacia oleracea (Spinach) protein is Small ribosomal subunit protein bS20c (RPS20).